We begin with the raw amino-acid sequence, 749 residues long: Amyloid-beta A4 precursor protein-binding family A member 2 (749 aa).

Disordered regions lie at residues 1–94 (MAHR…PEEE), 130–220 (DTDE…GDLE), and 238–344 (SMTS…NIPE). Phosphoserine is present on Ser11. Positions 70-80 (GDSSSDYVNNT) are enriched in polar residues. Composition is skewed to acidic residues over residues 81 to 94 (SEEEDYDEGLPEEE) and 131 to 142 (TDECQEAVEEWT). The STXBP1-binding stretch occupies residues 185-270 (HYCASKEGYQ…SVEACPPIKA (86 aa)). The residue at position 208 (Ser208) is a Phosphoserine. Positions 238-247 (SMTSITSASE) are enriched in polar residues. A compositionally biased stretch (basic and acidic residues) spans 305–315 (RTPEERLKWPH). Positions 368–555 (DGIIFAANYL…IINTQEMYND (188 aa)) constitute a PID domain. PDZ domains lie at 568-654 (ELQL…IVSC) and 659-734 (TVLI…TMPA).

As to quaternary structure, part of a multimeric complex containing STXBP1 and syntaxin-1. Binds to the cytoplasmic domain of amyloid-beta protein, and to the nuclear factor NF-kappa-B/p65 via its PDZ domain. Interacts with the N-terminal domain of NECAB3. Brain.

In terms of biological role, putative function in synaptic vesicle exocytosis by binding to STXBP1, an essential component of the synaptic vesicle exocytotic machinery. May modulate processing of the amyloid-beta precursor protein (APP) and hence formation of APP-beta. This is Amyloid-beta A4 precursor protein-binding family A member 2 (APBA2) from Homo sapiens (Human).